We begin with the raw amino-acid sequence, 305 residues long: Methionyl-tRNA formyltransferase (305 aa).

111 to 114 (SLLP) serves as a coordination point for (6S)-5,6,7,8-tetrahydrofolate.

This sequence belongs to the Fmt family.

It catalyses the reaction L-methionyl-tRNA(fMet) + (6R)-10-formyltetrahydrofolate = N-formyl-L-methionyl-tRNA(fMet) + (6S)-5,6,7,8-tetrahydrofolate + H(+). Functionally, attaches a formyl group to the free amino group of methionyl-tRNA(fMet). The formyl group appears to play a dual role in the initiator identity of N-formylmethionyl-tRNA by promoting its recognition by IF2 and preventing the misappropriation of this tRNA by the elongation apparatus. This chain is Methionyl-tRNA formyltransferase, found in Helicobacter pylori (strain P12).